A 129-amino-acid polypeptide reads, in one-letter code: Replication initiation control protein YabA (129 aa).

Residues 52–71 are disordered; it reads LSLTDEATPEPKAETEAEHG. Residues 60 to 71 show a composition bias toward basic and acidic residues; it reads PEPKAETEAEHG. 4 residues coordinate Zn(2+): His103, Cys105, Cys119, and Cys122.

The protein belongs to the YabA family. Homotetramer. Interacts with both DnaA and DnaN, acting as a bridge between these two proteins. It depends on Zn(2+) as a cofactor.

It localises to the cytoplasm. It is found in the nucleoid. Its function is as follows. Involved in control of chromosome replication initiation. Inhibits the cooperative binding of DnaA to the oriC region, thus negatively regulating initiation of chromosome replication. Inhibits the ability of DnaA-ATP to form a helix on DNA; does not disassemble preformed DnaA-DNA helices. Decreases the residence time of DnaA on the chromosome at its binding sites (oriC, replication forks and promoter-binding sites). Tethers DnaA to the replication machinery via the DNA polymerase beta sliding clamp subunit (dnaN). Associates with oriC and other DnaA targets on the chromosome in a DnaA-dependent manner. In Listeria monocytogenes serotype 4a (strain HCC23), this protein is Replication initiation control protein YabA.